Here is a 132-residue protein sequence, read N- to C-terminus: Large ribosomal subunit protein bL21 (132 aa).

Residues 104–132 (GKAPSIGPRPPREKKPVVETSAEADDAAA) form a disordered region.

Belongs to the bacterial ribosomal protein bL21 family. In terms of assembly, part of the 50S ribosomal subunit. Contacts protein L20.

Functionally, this protein binds to 23S rRNA in the presence of protein L20. This is Large ribosomal subunit protein bL21 from Rhodopseudomonas palustris (strain BisB18).